A 398-amino-acid chain; its full sequence is Cytochrome b (398 aa).

The helical transmembrane segment at 45 to 65 threads the bilayer; the sequence is LGSIAGIALVIQIITGVILAM. 2 residues coordinate heme b: H95 and H109. 9 consecutive transmembrane segments (helical) span residues 96–116, 129–149, 164–184, 192–212, 245–265, 277–297, 304–324, 339–359, and 366–386; these read AVGA…GLYY, IGII…VLPW, FSAI…GFSV, FFSL…LHLV, FVGF…EPNY, PLVT…YAIL, LGGV…PWLD, MAFW…GQPA, and ISRF…PLIG. Residues H196 and H210 each coordinate heme b.

The protein belongs to the cytochrome b family. The main subunits of complex b-c1 are: cytochrome b, cytochrome c1 and the Rieske protein. Requires heme b as cofactor.

Its subcellular location is the cell membrane. Component of the ubiquinol-cytochrome c reductase complex (complex III or cytochrome b-c1 complex), which is a respiratory chain that generates an electrochemical potential coupled to ATP synthesis. The chain is Cytochrome b (petB) from Rickettsia conorii (strain ATCC VR-613 / Malish 7).